A 722-amino-acid polypeptide reads, in one-letter code: Fatty acid oxidation complex subunit alpha (722 aa).

Residues 1–189 form an enoyl-CoA hydratase/isomerase region; sequence MIYQGKSLSA…AQGAIDAVVE (189 aa). Residue Asp-296 coordinates substrate. Positions 311–722 are 3-hydroxyacyl-CoA dehydrogenase; it reads TKAVNKAAVL…SYFTTDVKLA (412 aa). Residues Met-325, Asp-344, 401–403, Lys-408, and Ser-430 contribute to the NAD(+) site; that span reads VVE. His-451 serves as the catalytic For 3-hydroxyacyl-CoA dehydrogenase activity. Asn-454 is a binding site for NAD(+). Substrate contacts are provided by Asn-501 and Tyr-661.

The protein in the N-terminal section; belongs to the enoyl-CoA hydratase/isomerase family. In the C-terminal section; belongs to the 3-hydroxyacyl-CoA dehydrogenase family. In terms of assembly, heterotetramer of two alpha chains (FadB) and two beta chains (FadA).

The enzyme catalyses a (3S)-3-hydroxyacyl-CoA + NAD(+) = a 3-oxoacyl-CoA + NADH + H(+). The catalysed reaction is a (3S)-3-hydroxyacyl-CoA = a (2E)-enoyl-CoA + H2O. It carries out the reaction a 4-saturated-(3S)-3-hydroxyacyl-CoA = a (3E)-enoyl-CoA + H2O. It catalyses the reaction (3S)-3-hydroxybutanoyl-CoA = (3R)-3-hydroxybutanoyl-CoA. The enzyme catalyses a (3Z)-enoyl-CoA = a 4-saturated (2E)-enoyl-CoA. The catalysed reaction is a (3E)-enoyl-CoA = a 4-saturated (2E)-enoyl-CoA. The protein operates within lipid metabolism; fatty acid beta-oxidation. In terms of biological role, involved in the aerobic and anaerobic degradation of long-chain fatty acids via beta-oxidation cycle. Catalyzes the formation of 3-oxoacyl-CoA from enoyl-CoA via L-3-hydroxyacyl-CoA. It can also use D-3-hydroxyacyl-CoA and cis-3-enoyl-CoA as substrate. In Colwellia psychrerythraea (strain 34H / ATCC BAA-681) (Vibrio psychroerythus), this protein is Fatty acid oxidation complex subunit alpha.